Consider the following 374-residue polypeptide: Tetraacyldisaccharide 4'-kinase (374 aa).

59–66 lines the ATP pocket; sequence TAGGTGKT.

This sequence belongs to the LpxK family.

It catalyses the reaction a lipid A disaccharide + ATP = a lipid IVA + ADP + H(+). Its pathway is glycolipid biosynthesis; lipid IV(A) biosynthesis; lipid IV(A) from (3R)-3-hydroxytetradecanoyl-[acyl-carrier-protein] and UDP-N-acetyl-alpha-D-glucosamine: step 6/6. Transfers the gamma-phosphate of ATP to the 4'-position of a tetraacyldisaccharide 1-phosphate intermediate (termed DS-1-P) to form tetraacyldisaccharide 1,4'-bis-phosphate (lipid IVA). The sequence is that of Tetraacyldisaccharide 4'-kinase from Elusimicrobium minutum (strain Pei191).